Reading from the N-terminus, the 507-residue chain is Dolichyl pyrophosphate Man9GlcNAc2 alpha-1,3-glucosyltransferase (507 aa).

Topologically, residues 1–3 (MEK) are cytoplasmic. The helical transmembrane segment at 4-24 (WSLMTITVLLALTVRWTVSLG) threads the bilayer. Over 25–114 (SYSGAGKPPM…SQSHKLFMRT (90 aa)) the chain is Lumenal. An N-linked (GlcNAc...) asparagine glycan is attached at Asn-59. Residues 115–135 (TVFVADLLIYIPAVILYCCSL) form a helical membrane-spanning segment. Over 136 to 143 (KETSTKKK) the chain is Cytoplasmic. The helical transmembrane segment at 144–164 (VSSALCILLYPGLILIDHGHF) threads the bilayer. Topologically, residues 165-168 (QYNS) are lumenal. The helical transmembrane segment at 169–189 (VSLGFALWGVLCLSYDWDLLG) threads the bilayer. The Cytoplasmic segment spans residues 190 to 226 (SAAFCLALNYKQMELYHSLPFFCYLLGKCFKKGLKGK). A helical transmembrane segment spans residues 227-247 (GLLLLIKLAGTVVASFAVCWL). At 248-297 (PFCTDVEQIMQVLRRLFPIDRGLFEDKVANIWCSLSVLIKIKNVVSPQTQ) the chain is on the lumenal side. Residues 298-318 (LKLSFAVTFLSLLPTCIKLTV) form a helical membrane-spanning segment. Topologically, residues 319 to 338 (QPSLRGFKLTLVSCALSFFL) are cytoplasmic. The helical transmembrane segment at 339–359 (FSFQVHEKSILLVSVPVCLII) threads the bilayer. Topologically, residues 360-361 (NE) are lumenal. A helical transmembrane segment spans residues 362-382 (VPFMATWFLLVSTFSMLPLLL). At 383 to 387 (KDGLL) the chain is on the cytoplasmic side. The helical transmembrane segment at 388-408 (LPYAVTTLAFLSACVASFAIF) threads the bilayer. At 409 to 441 (EKTSAKDLQLKPFSQSLRGYVSWFKLFPKIVRS) the chain is on the lumenal side. Residues 442–462 (LFLLSVTLMGVLSVMSAAVHP) traverse the membrane as a helical segment. Residues 463–473 (PQRFPDLFPVS) are Cytoplasmic-facing. A helical membrane pass occupies residues 474–494 (VSSISCLHFLFFLVYFNVIIL). The Lumenal portion of the chain corresponds to 495–507 (WDSKNSRNQKKVS).

Belongs to the ALG6/ALG8 glucosyltransferase family.

It is found in the endoplasmic reticulum membrane. It catalyses the reaction an alpha-D-Man-(1-&gt;2)-alpha-D-Man-(1-&gt;2)-alpha-D-Man-(1-&gt;3)-[alpha-D-Man-(1-&gt;2)-alpha-D-Man-(1-&gt;3)-[alpha-D-Man-(1-&gt;2)-alpha-D-Man-(1-&gt;6)]-alpha-D-Man-(1-&gt;6)]-beta-D-Man-(1-&gt;4)-beta-D-GlcNAc-(1-&gt;4)-alpha-D-GlcNAc-diphospho-di-trans,poly-cis-dolichol + a di-trans,poly-cis-dolichyl beta-D-glucosyl phosphate = an alpha-D-Glc-(1-&gt;3)-alpha-D-Man-(1-&gt;2)-alpha-D-Man-(1-&gt;2)-alpha-D-Man-(1-&gt;3)-[alpha-D-Man-(1-&gt;2)-alpha-D-Man-(1-&gt;3)-[alpha-D-Man-(1-&gt;2)-alpha-D-Man-(1-&gt;6)]-alpha-D-Man-(1-&gt;6)]-beta-D-Man-(1-&gt;4)-beta-D-GlcNAc-(1-&gt;4)-alpha-D-GlcNAc-diphospho-di-trans,poly-cis-dolichol + a di-trans,poly-cis-dolichyl phosphate + H(+). The protein operates within protein modification; protein glycosylation. Its function is as follows. Dolichyl pyrophosphate Man9GlcNAc2 alpha-1,3-glucosyltransferase that operates in the biosynthetic pathway of dolichol-linked oligosaccharides, the glycan precursors employed in protein asparagine (N)-glycosylation. The assembly of dolichol-linked oligosaccharides begins on the cytosolic side of the endoplasmic reticulum membrane and finishes in its lumen. The sequential addition of sugars to dolichol pyrophosphate produces dolichol-linked oligosaccharides containing fourteen sugars, including two GlcNAcs, nine mannoses and three glucoses. Once assembled, the oligosaccharide is transferred from the lipid to nascent proteins by oligosaccharyltransferases. In the lumen of the endoplasmic reticulum, adds the first glucose residue from dolichyl phosphate glucose (Dol-P-Glc) onto the lipid-linked oligosaccharide intermediate Man(9)GlcNAc(2)-PP-Dol to produce Glc(1)Man(9)GlcNAc(2)-PP-Dol. Glc(1)Man(9)GlcNAc(2)-PP-Dol is a substrate for ALG8, the following enzyme in the biosynthetic pathway. The sequence is that of Dolichyl pyrophosphate Man9GlcNAc2 alpha-1,3-glucosyltransferase from Gallus gallus (Chicken).